Here is a 413-residue protein sequence, read N- to C-terminus: Multidrug resistance protein MdtA (413 aa).

The first 20 residues, Met1–Ala20, serve as a signal peptide directing secretion. Disordered regions lie at residues Ser31–Pro57 and Glu391–Ala413. The segment covering Pro32 to Gly49 has biased composition (low complexity). Residues Ala397 to Ala413 show a composition bias toward basic and acidic residues.

It belongs to the membrane fusion protein (MFP) (TC 8.A.1) family. As to quaternary structure, part of a tripartite efflux system composed of MdtA, MdtB and MdtC.

Its subcellular location is the cell inner membrane. This Salmonella typhi protein is Multidrug resistance protein MdtA.